A 79-amino-acid chain; its full sequence is Acyl carrier protein (79 aa).

The Carrier domain maps to 2–77 (SEIGERVKKI…DATKFLEKNA (76 aa)). Residue Ser37 is modified to O-(pantetheine 4'-phosphoryl)serine.

The protein belongs to the acyl carrier protein (ACP) family. In terms of processing, 4'-phosphopantetheine is transferred from CoA to a specific serine of apo-ACP by AcpS. This modification is essential for activity because fatty acids are bound in thioester linkage to the sulfhydryl of the prosthetic group.

It is found in the cytoplasm. It participates in lipid metabolism; fatty acid biosynthesis. Its function is as follows. Carrier of the growing fatty acid chain in fatty acid biosynthesis. The polypeptide is Acyl carrier protein (Nitrobacter hamburgensis (strain DSM 10229 / NCIMB 13809 / X14)).